The following is a 290-amino-acid chain: Ribosomal large subunit pseudouridine synthase B (290 aa).

In terms of domain architecture, S4 RNA-binding spans 3–75 (EKLQKVLARA…ICRVLAYYKP (73 aa)). The active-site Nucleophile is D110. Residues 251 to 290 (SSKVAVEKDRRRMKANQIRRAVKRHSQVSGSRRSGGRNNG) are disordered.

This sequence belongs to the pseudouridine synthase RsuA family.

It catalyses the reaction uridine(2605) in 23S rRNA = pseudouridine(2605) in 23S rRNA. Responsible for synthesis of pseudouridine from uracil-2605 in 23S ribosomal RNA. The sequence is that of Ribosomal large subunit pseudouridine synthase B (rluB) from Shigella flexneri.